The chain runs to 925 residues: Bifunctional imidazolonepropionase/histidine ammonia-lyase (925 aa).

The tract at residues 1–414 (MTKNSSTVFT…IKPHVRMEPF (414 aa)) is imidazolonepropionase. H73 and H75 together coordinate Fe(3+). H73 and H75 together coordinate Zn(2+). Residues R82, Y145, and H178 each contribute to the 4-imidazolone-5-propanoate site. Residue Y145 participates in N-formimidoyl-L-glutamate binding. H243 provides a ligand contact to Fe(3+). H243 contacts Zn(2+). Position 246 (Q246) interacts with 4-imidazolone-5-propanoate. D318 is a Fe(3+) binding site. D318 contributes to the Zn(2+) binding site. N320 and G322 together coordinate N-formimidoyl-L-glutamate. Residue T323 participates in 4-imidazolone-5-propanoate binding. A histidine ammonia-lyase region spans residues 415-925 (MTIILKPGSV…SAGILPDLEA (511 aa)). Positions 556–558 (ASG) form a cross-link, 5-imidazolinone (Ala-Gly). At S557 the chain carries 2,3-didehydroalanine (Ser).

This sequence in the N-terminal section; belongs to the metallo-dependent hydrolases superfamily. HutI family. It in the C-terminal section; belongs to the PAL/histidase family. It depends on Zn(2+) as a cofactor. Fe(3+) serves as cofactor. Contains an active site 4-methylidene-imidazol-5-one (MIO), which is formed autocatalytically by cyclization and dehydration of residues Ala-Ser-Gly.

The protein localises to the cytoplasm. The enzyme catalyses 4-imidazolone-5-propanoate + H2O = N-formimidoyl-L-glutamate. It catalyses the reaction L-histidine = trans-urocanate + NH4(+). It participates in amino-acid degradation; L-histidine degradation into L-glutamate; N-formimidoyl-L-glutamate from L-histidine: step 1/3. The protein operates within amino-acid degradation; L-histidine degradation into L-glutamate; N-formimidoyl-L-glutamate from L-histidine: step 3/3. Functionally, catalyzes the hydrolytic cleavage of the carbon-nitrogen bond in imidazolone-5-propanoate to yield N-formimidoyl-L-glutamate. It is the third step in the universal histidine degradation pathway. The protein is Bifunctional imidazolonepropionase/histidine ammonia-lyase (hutIH) of Brucella melitensis biotype 1 (strain ATCC 23456 / CCUG 17765 / NCTC 10094 / 16M).